A 178-amino-acid chain; its full sequence is Protein GrpE (178 aa).

Positions 1–11 (MSENQNPPPSP) are enriched in pro residues. Residues 1 to 23 (MSENQNPPPSPEEIEAAMSANAA) form a disordered region.

This sequence belongs to the GrpE family. In terms of assembly, homodimer.

The protein localises to the cytoplasm. Participates actively in the response to hyperosmotic and heat shock by preventing the aggregation of stress-denatured proteins, in association with DnaK and GrpE. It is the nucleotide exchange factor for DnaK and may function as a thermosensor. Unfolded proteins bind initially to DnaJ; upon interaction with the DnaJ-bound protein, DnaK hydrolyzes its bound ATP, resulting in the formation of a stable complex. GrpE releases ADP from DnaK; ATP binding to DnaK triggers the release of the substrate protein, thus completing the reaction cycle. Several rounds of ATP-dependent interactions between DnaJ, DnaK and GrpE are required for fully efficient folding. The protein is Protein GrpE of Acidovorax sp. (strain JS42).